Consider the following 490-residue polypeptide: 7-ethoxycoumarin O-deethylase (490 aa).

Cys-432 lines the heme pocket.

The protein belongs to the cytochrome P450 family. Requires heme as cofactor.

Capable of dealkylating a model xenobiotic compound, 7-ethoxycoumarin. Metabolizes with high efficiency a wide range of xenobiotics, including alkoxycoumarins, alkoxyresorufins, and several herbicides of the class of phenylureas. Catalyzes the double N-dealkylation (oxidative N-demethylation) of phenylureas such as chlortoluron and isoproturon with turnover rates comparable to those reported for physiological substrates and produces non-phytotoxic compounds. Could be used for control of herbicide tolerance and selectivity, as well as soil and groundwater bioremediation. The chain is 7-ethoxycoumarin O-deethylase (CYP76B1) from Helianthus tuberosus (Jerusalem artichoke).